A 73-amino-acid chain; its full sequence is MTVSIQMAGNLWKVHVKAGDQIEKGQEVAILESMKMEIPIVADRSGIVKEVKKKEGDFVNEGDVLLELSNSTQ.

Positions 2–69 constitute a Biotinyl-binding domain; that stretch reads TVSIQMAGNL…NEGDVLLELS (68 aa). Lys35 is modified (N6-biotinyllysine; alternate). N6-lipoyllysine; alternate is present on Lys35.

Post-translationally, can be both biotinylated and lipoylated on Lys-35 upon overexpression in E.coli depending on the growth medium; the nature of the modification in situ in B.subtilis is unknown.

The sequence is that of Biotin/lipoyl attachment protein (yngHB) from Bacillus subtilis (strain 168).